Consider the following 299-residue polypeptide: Hydroxymethylglutaryl-CoA lyase YngG (299 aa).

The Pyruvate carboxyltransferase domain occupies 7–274; the sequence is VTIKEVGPRD…KTNVKLEKLL (268 aa). Residue Arg15 participates in substrate binding. A divalent metal cation-binding residues include Asp16, His207, and His209. Residue Cys240 is part of the active site. Asn249 provides a ligand contact to a divalent metal cation.

Belongs to the HMG-CoA lyase family. Homodimer and homotetramer.

The enzyme catalyses (3S)-3-hydroxy-3-methylglutaryl-CoA = acetoacetate + acetyl-CoA. It participates in metabolic intermediate metabolism; (S)-3-hydroxy-3-methylglutaryl-CoA degradation; acetoacetate from (S)-3-hydroxy-3-methylglutaryl-CoA: step 1/1. In terms of biological role, involved in the catabolism of branched amino acids such as leucine. In Bacillus subtilis (strain 168), this protein is Hydroxymethylglutaryl-CoA lyase YngG (yngG).